An 819-amino-acid chain; its full sequence is Protein kinase C-binding protein NELL2 (819 aa).

The signal sequence occupies residues 1–24; sequence MHAMESRVLLRTFCVILGLEAVWG. Residues N56, N228, N296, and N301 are each glycosylated (N-linked (GlcNAc...) asparagine). A Laminin G-like domain is found at 58-231; that stretch reads TKAFLFQDSP…AQCPDLNRTC (174 aa). Positions 275 to 334 constitute a VWFC 1 domain; it reads RTCTMKGTTYREFESWTDGCKNCTCLNGTIQCETLVCPAPDCPAKSAPAYVDGKCCKECK. The EGF-like 1 domain occupies 400-442; that stretch reads GYDFCSEKHTCMENSVCRNLNDRAVCSCRDGFRALREDNAYCE. Cystine bridges form between C404–C416, C410–C425, and C427–C441. Ca(2+)-binding residues include D443, I444, and E446. An EGF-like 2; calcium-binding domain is found at 443-484; that stretch reads DIDECAEGRHYCRENTMCVNTPGSFLCICQTGYIRIDDYSCT. Cystine bridges form between C447/C460, C454/C469, C471/C483, C489/C502, C496/C511, C513/C524, C528/C538, C532/C544, and C546/C555. 3 residues coordinate Ca(2+): N462, T463, and S466. Positions 485-525 constitute an EGF-like 3; calcium-binding domain; sequence EHDECLTNQHNCDENALCFNTVGGHNCVCKPGYTGNGTTCK. Residue N520 is glycosylated (N-linked (GlcNAc...) asparagine). Positions 526–556 constitute an EGF-like 4 domain; sequence AFCKDGCRNGGACIAANVCACPQGFTGPSCE. Residue T551 is glycosylated (O-linked (GlcNAc...) threonine). Ca(2+) is bound by residues D558, I559, and E561. The region spanning 558–604 is the EGF-like 5; calcium-binding domain; that stretch reads DIDECSEGFVQCDSRANCINLPGWYHCECRDGYHDNGMFAPGGESCE. Disulfide bonds link C562–C575, C569–C584, and C586–C603. Residues N577, L578, and W581 each coordinate Ca(2+). Positions 605, 606, and 608 each coordinate Ca(2+). Positions 605–640 constitute an EGF-like 6; calcium-binding domain; it reads DIDECGTGRHSCANDTICFNLDGGYDCRCPHGKNCT. Disulfide bonds link C609/C622, C616/C631, and C633/C639. N-linked (GlcNAc...) asparagine glycosylation occurs at N618. Residues N624, L625, and G628 each contribute to the Ca(2+) site. N-linked (GlcNAc...) asparagine glycosylation occurs at N638. 2 VWFC domains span residues 641-696 and 701-759; these read GDCV…PECD and SQCL…PRCV.

As to quaternary structure, homotrimer. Binds to PRKCB. Interacts with NICOL1; this interaction triggers epididymal differentiation. Binds to PRKCB. In terms of tissue distribution, widely expressed. Expressed in cortical astrocytes but not in neuron. Widely expressed in brain. High expression is observed in telencephalic and diencephalic glutamatergic neurons, while no expression is found in GABAergic and GNRH neurons.

Its subcellular location is the secreted. The protein resides in the cytoplasm. Its function is as follows. Plays multiple roles In neural tissues, regulates neuronal proliferation, survival, differentiation, polarization, as well as axon guidance and synaptic functions. Plays an important role in axon development during neuronal differentiation through the MAPK intracellular signaling pathway. Via binding to its receptor ROBO3, plays a role in axon guidance, functioning as a repulsive axon guidance cue that contributes to commissural axon guidance to the midline. Required for neuron survival through the modulation of MAPK signaling pathways too. Involved in the regulation of hypothalamic GNRH secretion and the control of puberty. Functionally, epididymal-secreted protein that signals through a ROS1-pathway to regulate the epididymal initial segment (IS) maturation, sperm maturation and male fertility. In terms of biological role, acts as an endogenous inhibitor of PRKCB in glia. The polypeptide is Protein kinase C-binding protein NELL2 (Nell2) (Rattus norvegicus (Rat)).